Here is a 399-residue protein sequence, read N- to C-terminus: Fe-coproporphyrin III synthase (399 aa).

One can recognise a Radical SAM core domain in the interval Lys36 to Pro253. [4Fe-4S] cluster is bound by residues Cys50, Cys54, and Cys57.

The protein belongs to the radical SAM superfamily. Requires [4Fe-4S] cluster as cofactor.

It catalyses the reaction 12,18-didecarboxysiroheme + 2 AH2 + 2 S-adenosyl-L-methionine = Fe-coproporphyrin III + 2 5'-deoxyadenosine + 2 L-methionine + 2 acetate + 2 A + 2 H(+). The protein operates within porphyrin-containing compound metabolism; protoheme biosynthesis. Involved in siroheme-dependent heme b biosynthesis. Catalyzes the conversion of didecarboxysiroheme into Fe-coproporphyrin III by oxidative loss of two acetic acid side chains. The protein is Fe-coproporphyrin III synthase of Methanosarcina barkeri (strain Fusaro / DSM 804).